The following is a 150-amino-acid chain: Transcriptional repressor NrdR (150 aa).

The segment at 3-34 is a zinc-finger region; the sequence is CPFCGYEDTFVIDTREIEDQKVIRRRRECPNC. In terms of domain architecture, ATP-cone spans 49–139; the sequence is IMVIKKDGRR…VYQEFSSLEE (91 aa).

This sequence belongs to the NrdR family. Zn(2+) is required as a cofactor.

Negatively regulates transcription of bacterial ribonucleotide reductase nrd genes and operons by binding to NrdR-boxes. The polypeptide is Transcriptional repressor NrdR (Dictyoglomus turgidum (strain DSM 6724 / Z-1310)).